Consider the following 158-residue polypeptide: Putative ribonucleoside-diphosphate reductase small chain B (158 aa).

Belongs to the ribonucleoside diphosphate reductase small chain family.

The sequence is that of Putative ribonucleoside-diphosphate reductase small chain B (RNR2B) from Arabidopsis thaliana (Mouse-ear cress).